The following is a 1019-amino-acid chain: Protein HIRA (1019 aa).

WD repeat units follow at residues 11 to 53 (HNGK…KEED), 68 to 107 (NHLA…GPST), 129 to 168 (SHSG…EILA), 172 to 211 (GHSG…LETS), 220 to 263 (GGTT…TNMD), 266 to 322 (GHRK…PLVV), and 326 to 367 (LFDK…DPLS). Positions 23 to 443 (PDGTKFATGG…ASMVNGESLE (421 aa)) are interaction with RBBP4. 2 stretches are compositionally biased toward low complexity: residues 406 to 415 (QRQQQQQAEQ) and 544 to 561 (ATSV…VLTT). Disordered regions lie at residues 406-433 (QRQQ…APKV), 513-561 (ANSL…VLTT), and 599-633 (LKDQ…LSAP). The segment at 444–1019 (DIRKNLLKKQ…TEYQEQLDIL (576 aa)) is interaction with HDAC1. Residues 599 to 625 (LKDQNLIKDNKPKDILESSSDSEEKIP) are compositionally biased toward basic and acidic residues. The interval 960–1019 (RLRELCKDLLGPVHYSRGSQWESTVMGLRKRELLKELLPVIGQNLFQRLFTEYQEQLDIL) is interaction with HDAC2.

This sequence belongs to the WD repeat HIR1 family. Interacts with ASF1, HDAC1, HDAC2 and RBBP4.

The protein localises to the nucleus. Cooperates with ASF1A to promote replication-independent chromatin assembly. May regulate the transcription of a variety of genes controlling cell growth. This Gallus gallus (Chicken) protein is Protein HIRA (HIRA).